A 181-amino-acid polypeptide reads, in one-letter code: Large ribosomal subunit protein uL10 (181 aa).

The protein belongs to the universal ribosomal protein uL10 family. Part of the ribosomal stalk of the 50S ribosomal subunit. The N-terminus interacts with L11 and the large rRNA to form the base of the stalk. The C-terminus forms an elongated spine to which L12 dimers bind in a sequential fashion forming a multimeric L10(L12)X complex.

Forms part of the ribosomal stalk, playing a central role in the interaction of the ribosome with GTP-bound translation factors. In Chloroflexus aggregans (strain MD-66 / DSM 9485), this protein is Large ribosomal subunit protein uL10.